The following is a 124-amino-acid chain: Small ribosomal subunit protein bS6 (124 aa).

This sequence belongs to the bacterial ribosomal protein bS6 family.

Binds together with bS18 to 16S ribosomal RNA. The sequence is that of Small ribosomal subunit protein bS6 from Chromobacterium violaceum (strain ATCC 12472 / DSM 30191 / JCM 1249 / CCUG 213 / NBRC 12614 / NCIMB 9131 / NCTC 9757 / MK).